We begin with the raw amino-acid sequence, 126 residues long: Copper resistance protein C (126 aa).

Residues Met-1–Ala-23 form the signal peptide. His-24 lines the Cu(2+) pocket. Cu(+) contacts are provided by Met-63, Met-66, Met-69, His-72, and Met-75. His-115 serves as a coordination point for Cu(2+).

Belongs to the CopC family. As to quaternary structure, monomer-dimer equilibrium in solution for the apo protein. Dimerization is significantly enhanced upon binding of copper(I).

The protein localises to the periplasm. Copper-binding protein involved in copper resistance. This is Copper resistance protein C from Escherichia coli.